Here is a 290-residue protein sequence, read N- to C-terminus: MPSSREIKRRIRSVKNVAQITRAMEMVSASKMRRAQRNVLATRPYADRMREVMANLTARVVGAARRGTLLEKRETVKSVALLVVTPDRGLCGSLVANVLRRAGRFITEQRAMGRTVDVYTFGRKGRDFFLRTGFAPAGEATRLGDAPKLEAILGVAISAINGFQSGKYDELYIIYSEFINTLVQRPAIKQLLPVESPDISTTTNVDYTYEPGEEEVLNSILPRYVETQIYQAVLESIASEHSARMVAMRNATNNAKDLVRDLTLSFNKARQAAITKEVSEIASGAAALTS.

This sequence belongs to the ATPase gamma chain family. F-type ATPases have 2 components, CF(1) - the catalytic core - and CF(0) - the membrane proton channel. CF(1) has five subunits: alpha(3), beta(3), gamma(1), delta(1), epsilon(1). CF(0) has three main subunits: a, b and c.

It is found in the cell membrane. In terms of biological role, produces ATP from ADP in the presence of a proton gradient across the membrane. The gamma chain is believed to be important in regulating ATPase activity and the flow of protons through the CF(0) complex. The protein is ATP synthase gamma chain of Chloroflexus aurantiacus (strain ATCC 29366 / DSM 635 / J-10-fl).